Here is a 280-residue protein sequence, read N- to C-terminus: Phosphonates import ATP-binding protein PhnC 1 (280 aa).

The ABC transporter domain maps to 3–247; that stretch reads FRLDAASVSY…LLRELYASES (245 aa). Residue 36-43 participates in ATP binding; that stretch reads GPSGAGKT.

This sequence belongs to the ABC transporter superfamily. Phosphonates importer (TC 3.A.1.9.1) family. In terms of assembly, the complex is composed of two ATP-binding proteins (PhnC), two transmembrane proteins (PhnE) and a solute-binding protein (PhnD).

Its subcellular location is the cell inner membrane. It carries out the reaction phosphonate(out) + ATP + H2O = phosphonate(in) + ADP + phosphate + H(+). Part of the ABC transporter complex PhnCDE involved in phosphonates import. Responsible for energy coupling to the transport system. The polypeptide is Phosphonates import ATP-binding protein PhnC 1 (Cupriavidus necator (strain ATCC 17699 / DSM 428 / KCTC 22496 / NCIMB 10442 / H16 / Stanier 337) (Ralstonia eutropha)).